Reading from the N-terminus, the 63-residue chain is Large ribosomal subunit protein uL29 (63 aa).

Belongs to the universal ribosomal protein uL29 family.

The polypeptide is Large ribosomal subunit protein uL29 (Actinobacillus succinogenes (strain ATCC 55618 / DSM 22257 / CCUG 43843 / 130Z)).